The following is a 349-amino-acid chain: Anthranilate phosphoribosyltransferase (349 aa).

5-phospho-alpha-D-ribose 1-diphosphate-binding positions include Gly-82, Gly-85–Asp-86, Asn-92–Thr-95, Lys-110–Ser-118, and Ser-122. Gly-82 is an anthranilate binding site. Ser-94 provides a ligand contact to Mg(2+). Residue Asn-113 participates in anthranilate binding. Position 168 (Arg-168) interacts with anthranilate. Asp-227 and Glu-228 together coordinate Mg(2+).

The protein belongs to the anthranilate phosphoribosyltransferase family. As to quaternary structure, homodimer. Mg(2+) serves as cofactor.

The catalysed reaction is N-(5-phospho-beta-D-ribosyl)anthranilate + diphosphate = 5-phospho-alpha-D-ribose 1-diphosphate + anthranilate. Its pathway is amino-acid biosynthesis; L-tryptophan biosynthesis; L-tryptophan from chorismate: step 2/5. In terms of biological role, catalyzes the transfer of the phosphoribosyl group of 5-phosphorylribose-1-pyrophosphate (PRPP) to anthranilate to yield N-(5'-phosphoribosyl)-anthranilate (PRA). The protein is Anthranilate phosphoribosyltransferase of Acinetobacter baumannii (strain ATCC 17978 / DSM 105126 / CIP 53.77 / LMG 1025 / NCDC KC755 / 5377).